Consider the following 392-residue polypeptide: 8-amino-7-oxononanoate synthase 1 (392 aa).

Position 109–110 (G109–F110) interacts with pyridoxal 5'-phosphate. Position 134 (H134) interacts with substrate. Residues S181, D206 to H209, and T237 to K240 contribute to the pyridoxal 5'-phosphate site. An N6-(pyridoxal phosphate)lysine modification is found at K240. T354 lines the substrate pocket.

It belongs to the class-II pyridoxal-phosphate-dependent aminotransferase family. BioF subfamily. Homodimer. Requires pyridoxal 5'-phosphate as cofactor.

It catalyses the reaction 6-carboxyhexanoyl-[ACP] + L-alanine + H(+) = (8S)-8-amino-7-oxononanoate + holo-[ACP] + CO2. It participates in cofactor biosynthesis; biotin biosynthesis. In terms of biological role, catalyzes the decarboxylative condensation of pimeloyl-[acyl-carrier protein] and L-alanine to produce 8-amino-7-oxononanoate (AON), [acyl-carrier protein], and carbon dioxide. The protein is 8-amino-7-oxononanoate synthase 1 (kbl) of Bacillus subtilis (strain 168).